A 291-amino-acid polypeptide reads, in one-letter code: Ribonuclease Z (291 aa).

Residues histidine 61, histidine 63, aspartate 65, histidine 66, histidine 133, aspartate 201, and histidine 257 each coordinate Zn(2+). The Proton acceptor role is filled by aspartate 65.

This sequence belongs to the RNase Z family. In terms of assembly, homodimer. The cofactor is Zn(2+).

The catalysed reaction is Endonucleolytic cleavage of RNA, removing extra 3' nucleotides from tRNA precursor, generating 3' termini of tRNAs. A 3'-hydroxy group is left at the tRNA terminus and a 5'-phosphoryl group is left at the trailer molecule.. Its function is as follows. Zinc phosphodiesterase, which displays some tRNA 3'-processing endonuclease activity. Probably involved in tRNA maturation, by removing a 3'-trailer from precursor tRNA. The polypeptide is Ribonuclease Z (Saccharolobus islandicus (strain Y.N.15.51 / Yellowstone #2) (Sulfolobus islandicus)).